The chain runs to 141 residues: Hemoglobin subunit alpha (141 aa).

A Globin domain is found at 1–141; it reads VLSSTDKSNV…VSTVLTSKYR (141 aa). Ser-3 carries the phosphoserine modification. Residues Lys-7 and Lys-11 each carry the N6-succinyllysine modification. At Lys-16 the chain carries N6-acetyllysine; alternate. Lys-16 carries the post-translational modification N6-succinyllysine; alternate. Tyr-24 is modified (phosphotyrosine). Residue Ser-35 is modified to Phosphoserine. The residue at position 40 (Lys-40) is an N6-succinyllysine. O2 is bound at residue His-58. His-87 contacts heme b. Residue Ser-102 is modified to Phosphoserine. Thr-108 is subject to Phosphothreonine. Residues Ser-124 and Ser-131 each carry the phosphoserine modification. Residues Thr-134 and Thr-137 each carry the phosphothreonine modification. Phosphoserine is present on Ser-138.

It belongs to the globin family. Heterotetramer of two alpha chains and two beta chains. In terms of tissue distribution, red blood cells.

Its function is as follows. Involved in oxygen transport from the lung to the various peripheral tissues. Hemopressin acts as an antagonist peptide of the cannabinoid receptor CNR1. Hemopressin-binding efficiently blocks cannabinoid receptor CNR1 and subsequent signaling. The protein is Hemoglobin subunit alpha (HBA) of Pteropus poliocephalus (Grey-headed flying fox).